The sequence spans 678 residues: Oviduct-specific glycoprotein (678 aa).

An N-terminal signal peptide occupies residues 1 to 21 (MWKLLLWVGLVLVLKHHDGAA). The region spanning 22-385 (HKLVCYFTNW…YVLNDILVRA (364 aa)) is the GH18 domain. Cys-26 and Cys-51 are disulfide-bonded. Residues 71–72 (LQ), 98–101 (GGWN), Tyr-142, 211–214 (LSYD), and Trp-355 each bind chitin. Residues Asn-402 and Asn-441 are each glycosylated (N-linked (GlcNAc...) asparagine). Residues 524–544 (LTPVGHQSVTPVSHQSVSPGG) form a disordered region. The span at 528-544 (GHQSVTPVSHQSVSPGG) shows a compositional bias: polar residues. 3 N-linked (GlcNAc...) asparagine glycosylation sites follow: Asn-580, Asn-596, and Asn-648. Positions 581–606 (ISVTPEGQTMPLRGENLTSEVGTHPR) are disordered. Positions 651-662 (SVNSVTPQTSPL) are enriched in polar residues. The disordered stretch occupies residues 651–678 (SVNSVTPQTSPLSLKKEIPENSAVDEEA).

The protein belongs to the glycosyl hydrolase 18 family. As to expression, oviduct.

It is found in the cytoplasmic vesicle. It localises to the secretory vesicle. Functionally, binds to oocyte zona pellucida in vivo. May play a role in the fertilization process and/or early embryonic development. This chain is Oviduct-specific glycoprotein (OVGP1), found in Homo sapiens (Human).